The following is a 968-amino-acid chain: MTQQTGQDADQRPSYKDTLNLLETGFGMRANAIHREPELQAFWKEKGIDLDLGRNNPGPVFTLHDGPPYANGALHMGHALNKVLKDIINKHRLMQGRKVRFVPGWDCHGLPIELKVLQAMNQEQRQALTPIKLRKKAAAYAHKQVAGQRAGFQRWGIWADWDHPYLTLQKDYEAAQIDVFGTMALKGHIYRGLKPVHWSPSSRTALAEAELEYPDGHTSPSVYVGFPVVDLPESLRSKLNAQGLDVPAASDTLSQCLQVAIWTTTPWTLPANLAVSVNDRLDYCLADDGNGQLLIVAAELCDSIASKLERPLQAKATVKGADLAGITYSHPLLERRSAIVVGGEYITTESGTGLVHTAPGHGVDDFNTGRKHGLPVLCPVDEAGTLTAEAGPFEGLNVLKDANAKIIAALEDSGSLLLQESYSHRYPYDWRTKKPTIFRATEQWFASVEGFRTEALTAIDGVQWLPASGRNRIESMVSERGDWCISRQRTWGVPIPVFYQRETGEVLLNSDSIAHVKALIAEHGADIWWEKDEVDLLPSSHKAEAHLWRKGTDTMDVWFDSGSSWASVSSQRDGLSYPADLYLEGSDQHRGWFQSSLLTSVAVNGTAPYRTVLTHGFALDEKGRKMSKSLGNVVDPMVIIEGGKNQKQEPAYGADVLRLWVSSVDYSADVPIGAGILRQLSDVYRKVRNTSRYLLGNLHDFIPSRDAISISDLPLLDRWMLQRTATVLDQISEAFERYEFFRFFQLLQNFCVADLSNFYLDIAKDRLYVSAPNDKRRRSCQTVMALIIERLAAAIAPVLCHMAEDIWQNIPYPTGTESVFLSGWPSVPEEWRDDSLRDPMQELRELRAAVNKVLEECRSKRKLGSSLEAAVRLEARTPALQDALQWLQSKGDQEVDGLRDWLLVSQLQIGGEPWAELLASDDNELAVIEVALSRGQKCERCWHYEADIGQYSDHPGLCGRCVSVLERR.

The short motif at Pro68–His78 is the 'HIGH' region element. Residue Glu584 participates in L-isoleucyl-5'-AMP binding. Residues Lys625–Ser629 carry the 'KMSKS' region motif. ATP is bound at residue Lys628. The Zn(2+) site is built by Cys938, Cys941, Cys958, and Cys961.

This sequence belongs to the class-I aminoacyl-tRNA synthetase family. IleS type 1 subfamily. Monomer. The cofactor is Zn(2+).

Its subcellular location is the cytoplasm. The enzyme catalyses tRNA(Ile) + L-isoleucine + ATP = L-isoleucyl-tRNA(Ile) + AMP + diphosphate. In terms of biological role, catalyzes the attachment of isoleucine to tRNA(Ile). As IleRS can inadvertently accommodate and process structurally similar amino acids such as valine, to avoid such errors it has two additional distinct tRNA(Ile)-dependent editing activities. One activity is designated as 'pretransfer' editing and involves the hydrolysis of activated Val-AMP. The other activity is designated 'posttransfer' editing and involves deacylation of mischarged Val-tRNA(Ile). The protein is Isoleucine--tRNA ligase of Synechococcus sp. (strain CC9311).